The sequence spans 270 residues: NAD kinase (270 aa).

D57 serves as the catalytic Proton acceptor. Residues 57–58, 125–126, R150, and N227 contribute to the NAD(+) site; these read DG and NE.

Belongs to the NAD kinase family. A divalent metal cation is required as a cofactor.

It localises to the cytoplasm. The enzyme catalyses NAD(+) + ATP = ADP + NADP(+) + H(+). Functionally, involved in the regulation of the intracellular balance of NAD and NADP, and is a key enzyme in the biosynthesis of NADP. Catalyzes specifically the phosphorylation on 2'-hydroxyl of the adenosine moiety of NAD to yield NADP. The protein is NAD kinase of Ureaplasma parvum serovar 3 (strain ATCC 700970).